The chain runs to 183 residues: Large ribosomal subunit protein uL6 (183 aa).

The protein belongs to the universal ribosomal protein uL6 family. In terms of assembly, part of the 50S ribosomal subunit.

This protein binds to the 23S rRNA, and is important in its secondary structure. It is located near the subunit interface in the base of the L7/L12 stalk, and near the tRNA binding site of the peptidyltransferase center. The protein is Large ribosomal subunit protein uL6 of Porphyromonas gingivalis (strain ATCC 33277 / DSM 20709 / CIP 103683 / JCM 12257 / NCTC 11834 / 2561).